Reading from the N-terminus, the 311-residue chain is MPSTIEAIYIILIAGELTIGIWGNGFIVLVNCIDWLKRRDVSLIDIILISLAISRICLLCVISLDGFFILLFPGTYDINVLESIMDAVWTFANNSSLWFTSCLSIFYLLKIANISHPFFFWLKLKINKVILAILLGSFLISLIISFPINGXWYHLFKVSHEENITWAFKVSTIPGAFKQLTLNLGAMVPFMLCLISFFLLLFSLVRHTKQIQLHATGLRDPSTEAHMRAIKAVIIFLLLLIVYYPVFLVMTSSTLIPQGKLVLMIGDIVTVIFPSSHSFILIMGNSKLREAFLKMLRFVKGFLRRRKPFGP.

Residues 1–9 lie on the Extracellular side of the membrane; it reads MPSTIEAIY. The chain crosses the membrane as a helical span at residues 10-32; sequence IILIAGELTIGIWGNGFIVLVNC. The Cytoplasmic portion of the chain corresponds to 33 to 52; that stretch reads IDWLKRRDVSLIDIILISLA. Residues 53 to 72 traverse the membrane as a helical segment; the sequence is ISRICLLCVISLDGFFILLF. The Extracellular segment spans residues 73 to 86; the sequence is PGTYDINVLESIMD. Residues 87 to 109 traverse the membrane as a helical segment; it reads AVWTFANNSSLWFTSCLSIFYLL. The Cytoplasmic segment spans residues 110–128; it reads KIANISHPFFFWLKLKINK. Residues 129 to 146 traverse the membrane as a helical segment; it reads VILAILLGSFLISLIISF. Residues 147–179 are Extracellular-facing; sequence PINGXWYHLFKVSHEENITWAFKVSTIPGAFKQ. Asn163 carries an N-linked (GlcNAc...) asparagine glycan. The chain crosses the membrane as a helical span at residues 180–202; sequence LTLNLGAMVPFMLCLISFFLLLF. Over 203–233 the chain is Cytoplasmic; it reads SLVRHTKQIQLHATGLRDPSTEAHMRAIKAV. Residues 234–256 form a helical membrane-spanning segment; the sequence is IIFLLLLIVYYPVFLVMTSSTLI. The Extracellular portion of the chain corresponds to 257 to 260; sequence PQGK. Residues 261–283 traverse the membrane as a helical segment; that stretch reads LVLMIGDIVTVIFPSSHSFILIM. Over 284–311 the chain is Cytoplasmic; sequence GNSKLREAFLKMLRFVKGFLRRRKPFGP.

Belongs to the G-protein coupled receptor T2R family.

It localises to the membrane. In terms of biological role, gustducin-coupled receptor implicated in the perception of bitter compounds in the oral cavity and the gastrointestinal tract. Signals through PLCB2 and the calcium-regulated cation channel TRPM5. This chain is Taste receptor type 2 member 9 (TAS2R9), found in Papio hamadryas (Hamadryas baboon).